The chain runs to 327 residues: Aspartate carbamoyltransferase catalytic subunit (327 aa).

Arg-73 and Thr-74 together coordinate carbamoyl phosphate. Lys-101 contacts L-aspartate. The carbamoyl phosphate site is built by Arg-123, His-153, and Gln-156. Positions 186 and 241 each coordinate L-aspartate. Positions 282 and 283 each coordinate carbamoyl phosphate.

Belongs to the aspartate/ornithine carbamoyltransferase superfamily. ATCase family. In terms of assembly, heterododecamer (2C3:3R2) of six catalytic PyrB chains organized as two trimers (C3), and six regulatory PyrI chains organized as three dimers (R2).

The enzyme catalyses carbamoyl phosphate + L-aspartate = N-carbamoyl-L-aspartate + phosphate + H(+). It participates in pyrimidine metabolism; UMP biosynthesis via de novo pathway; (S)-dihydroorotate from bicarbonate: step 2/3. Catalyzes the condensation of carbamoyl phosphate and aspartate to form carbamoyl aspartate and inorganic phosphate, the committed step in the de novo pyrimidine nucleotide biosynthesis pathway. This is Aspartate carbamoyltransferase catalytic subunit from Acidithiobacillus ferrooxidans (strain ATCC 23270 / DSM 14882 / CIP 104768 / NCIMB 8455) (Ferrobacillus ferrooxidans (strain ATCC 23270)).